Consider the following 120-residue polypeptide: FK506-binding protein 1A (120 aa).

The 89-residue stretch at 26 to 114 (GDNVDVHYKG…IFETELVGIK (89 aa)) folds into the PPIase FKBP-type domain.

The protein belongs to the FKBP-type PPIase family. FKBP1 subfamily.

The protein localises to the cytoplasm. It catalyses the reaction [protein]-peptidylproline (omega=180) = [protein]-peptidylproline (omega=0). In terms of biological role, PPIases accelerate the folding of proteins. It catalyzes the cis-trans isomerization of proline imidic peptide bonds in oligopeptides. The polypeptide is FK506-binding protein 1A (fkr-2) (Neurospora crassa (strain ATCC 24698 / 74-OR23-1A / CBS 708.71 / DSM 1257 / FGSC 987)).